The sequence spans 582 residues: ATP-dependent lipid A-core flippase (582 aa).

Transmembrane regions (helical) follow at residues 27 to 47 (LIVA…MISL), 69 to 89 (LIIF…TYCL), 142 to 162 (ALVS…LMFY), 165 to 185 (WQLS…IGVV), and 249 to 269 (AAAN…VLYL). Residues 28 to 310 (IVAVIALVIN…LTNVTSQFQR (283 aa)) enclose the ABC transmembrane type-1 domain. Residues 342–578 (VSVKDVSFTY…NGAYAQLHRI (237 aa)) form the ABC transporter domain. Residue 376–383 (GRSGSGKS) coordinates ATP.

The protein belongs to the ABC transporter superfamily. Lipid exporter (TC 3.A.1.106) family. In terms of assembly, homodimer.

Its subcellular location is the cell inner membrane. The catalysed reaction is ATP + H2O + lipid A-core oligosaccharideSide 1 = ADP + phosphate + lipid A-core oligosaccharideSide 2.. Its function is as follows. Involved in lipopolysaccharide (LPS) biosynthesis. Translocates lipid A-core from the inner to the outer leaflet of the inner membrane. Transmembrane domains (TMD) form a pore in the inner membrane and the ATP-binding domain (NBD) is responsible for energy generation. The sequence is that of ATP-dependent lipid A-core flippase from Vibrio parahaemolyticus serotype O3:K6 (strain RIMD 2210633).